Here is a 363-residue protein sequence, read N- to C-terminus: Peroxisomal (S)-2-hydroxyacid oxidase GLO4 (363 aa).

Residues 1-357 form the FMN hydroxy acid dehydrogenase domain; that stretch reads MDQIVNVDEF…TRNHVRTENE (357 aa). FMN-binding positions include 78–80, serine 107, 128–130, and threonine 156; these read PTA and QIY. Residue tyrosine 130 coordinates a 2-oxocarboxylate. A 2-oxocarboxylate is bound at residue arginine 165. 2 residues coordinate FMN: lysine 228 and serine 250. Histidine 252 serves as the catalytic Proton acceptor. Position 255 (arginine 255) interacts with a 2-oxocarboxylate. FMN is bound by residues 283–287 and 306–307; these read DGGVR and GR. The Microbody targeting signal motif lies at 361–363; sequence SML.

It belongs to the FMN-dependent alpha-hydroxy acid dehydrogenase family. As to quaternary structure, homotetramer. The cofactor is FMN.

Its subcellular location is the peroxisome. The catalysed reaction is a (2S)-2-hydroxycarboxylate + O2 = a 2-oxocarboxylate + H2O2. It carries out the reaction 2-hydroxydodecanoate + O2 = 2-oxododecanoate + H2O2. The enzyme catalyses 2-hydroxyhexanoate + O2 = 2-oxohexanoate + H2O2. It catalyses the reaction 2-hydroxyoctanoate + O2 = 2-oxooctanoate + H2O2. The catalysed reaction is (S)-lactate + O2 = pyruvate + H2O2. It participates in lipid metabolism; fatty acid metabolism. Oxidase that catalyzes the oxidation of a broad range of 2-hydroxyacids to the corresponding 2-oxoacids, with a reduction of O2 to H2O2. Displays the highest activity with the long-chain fatty acid 2-hydroxydodecanoate and has intermediate activity with 2-hydroxyhexanoate, 2-hydroxyoctanote, and the short-chain hydroxyacid (S)-lactate (L-lactate). With much lower activity, it can also use glycolate, leucic acid, valic acid, and isoleucic acid as substrates in vitro. Cannot use 2-hydroxyhexadecanoate or D-lactate as substrates. May be involved in a general medium- and long-chain fatty acid catabolic pathway such as alpha-oxidation. In Arabidopsis thaliana (Mouse-ear cress), this protein is Peroxisomal (S)-2-hydroxyacid oxidase GLO4 (GLO4).